Reading from the N-terminus, the 246-residue chain is Phycocyanobilin:ferredoxin oxidoreductase (246 aa).

The protein belongs to the HY2 family.

The enzyme catalyses (2R,3Z)-phycocyanobilin + 4 oxidized [2Fe-2S]-[ferredoxin] = biliverdin IXalpha + 4 reduced [2Fe-2S]-[ferredoxin] + 4 H(+). Functionally, catalyzes the four-electron reduction of biliverdin IX-alpha (2-electron reduction at both the A and D rings); the reaction proceeds via an isolatable 2-electron intermediate, 181,182-dihydrobiliverdin. The protein is Phycocyanobilin:ferredoxin oxidoreductase of Synechococcus sp. (strain CC9902).